Reading from the N-terminus, the 1006-residue chain is MAEQESLEFGKADFVLMDTVSMPEFMANLRLRFEKGRIYTFIGEVVVSVNPYKVLNIYGRDTIEQYKGRELYERPPHLFAIADAAYKAMKRRSKDTCIMISGESGAGKTEASKYIMQYIAAITNPSQRAEIERVKNMLLKSNCVLEAFGNAKTNRNDNSSRFGKYMDINFDFKGDPIGGHINNYLLEKSRVIVQQPGERSFHSFYQLLQGGSEQMLHSLHLQKSLSSYNYIRVGAQLKSSINDAAEFKVVADAMKVIGFKPEEIQTVYKILAAILHLGNLKFIVDGDTPLIENGKVVSVIAELLSTKADMVEKALLYRTVATGRDIIDKQHTEQEASYGRDAFAKAIYERLFCWIVTRINDIIEVKNYDTTVHGKNTVIGVLDIYGFEIFDNNSFEQFCINYCNEKLQQLFIQLVLKQEQEEYQREGIPWKHIDYFNNQIIVDLVEQQHKGIIAILDDACMNVGKVTDGMFLEALNSKLGKHGHFSSRKTCASDKILEFDRDFRIRHYAGDVVYSVIGFIDKNKDTLFQDFKRLMYNSSNPVLKNMWPEGKLSITEVTKRPLTAATLFKNSMIALVDNLASKEPYYVRCIKPNDKKSPQIFDDERCRHQVEYLGLLENVRVRRAGFAFRQTYEKFLHRYKMISEFTWPNHDLPSDKEAVKKLIERCGFQDDVAYGKTKIFIRTPRTLFTLEELRAQMLVRVVLFLQKVWRGTLARMRYKRTKAALTIIRYYRRYKVKSYIHEVARRFHGVKNMRDYGKHVKWPTPPKVLRRFEEALQSIFNRWRASQLIKTIPASDLPQVRAKVAAMEMLKGQRADLGLQRAWEGNYLASKPDTPQTSGTFVPVANELKRKDKYMNVLFSCHVRKVNRFSKVEDRAIFVTDRHLYKMDPTKQYKVMKTIPLYNLTGLSVSNGKDQLVVFHTKDNKDLIVCLFSKQPTHESRIGELVGVLVNHFKSEKRHLQVNVTNPVQCSLHGKKCTVSVETRLNQPQPDFTKNRSGFILSVPGN.

Residue Ala-2 is modified to N-acetylalanine. A Myosin motor domain is found at 9–695 (FGKADFVLMD…TLFTLEELRA (687 aa)). Residue 102–109 (GESGAGKT) participates in ATP binding. Ser-200 carries the phosphoserine modification. Tyr-536 is modified (phosphotyrosine). Residues 572–594 (MIALVDNLASKEPYYVRCIKPND) form an actin-binding region. 2 consecutive IQ domains span residues 699-719 (VRVV…MRYK) and 721-741 (TKAA…SYIH). Positions 776–896 (LQSIFNRWRA…MDPTKQYKVM (121 aa)) are interaction with calmodulin. The TH1 domain occupies 812–1005 (GQRADLGLQR…RSGFILSVPG (194 aa)).

It belongs to the TRAFAC class myosin-kinesin ATPase superfamily. Myosin family. Interacts (via the two IQ motifs) with calmodulin. Binds an additional calmodulin chain via a third, C-terminal region. Interacts with F-actin. Detected on tracheal epithelial cells, and on epithelial cells and brush border cells in duodenum, jejunum and ileum. Detected on myelinated white matter in the cerebellum, and the myelinated part of the optic nerve. Detected on mature oligodendrocites. Detected on the outside of the myelin sheet that surrounds axons (at protein level). Ubiquitous. Highest levels in adult brain, and spinal cord. Moderate levels in lung, kidney, liver and spleen. Low levels in testis and heart (at protein level).

It is found in the cytoplasm. The protein localises to the perikaryon. Its subcellular location is the cell projection. The protein resides in the dendrite. It localises to the early endosome. It is found in the cell cortex. In terms of biological role, unconventional myosin that functions as actin-based motor protein with ATPase activity. Plays a role in endosomal protein trafficking, and especially in the transfer of cargo proteins from early to recycling endosomes. Required for normal planar cell polarity in ciliated tracheal cells, for normal rotational polarity of cilia, and for coordinated, unidirectional ciliary movement in the trachea. Required for normal, polarized cilia organization in brain ependymal epithelial cells. This chain is Unconventional myosin-Id (Myo1d), found in Rattus norvegicus (Rat).